The chain runs to 813 residues: Protein SBE22 (813 aa).

Disordered regions lie at residues 1–66 (MIRP…HGHA), 107–240 (EIFS…GEFG), and 331–359 (QKDSATNSSSTITERITPGENQSQNNRES). Residues 56 to 66 (RPSDNLFHGHA) are compositionally biased toward basic and acidic residues. The span at 107 to 121 (EIFSTSSSDTQSNIS) shows a compositional bias: low complexity. Basic and acidic residues predominate over residues 127–138 (SEDHSFGMDKSV). 3 stretches are compositionally biased toward polar residues: residues 139–160 (DNSSTNATLTNRSIENRSNGDS), 169–200 (VSVNRSTKSGNNPLQRTQSETISVNMSHNRSM), and 214–234 (KNSSIPNLRYNSQPQQDNRSV).

The protein belongs to the SBE2 family.

The protein localises to the cytoplasm. Its subcellular location is the golgi apparatus. With SBE2, is involved in cell wall integrity and polarity processes like bud growth. The polypeptide is Protein SBE22 (SBE22) (Candida glabrata (strain ATCC 2001 / BCRC 20586 / JCM 3761 / NBRC 0622 / NRRL Y-65 / CBS 138) (Yeast)).